Consider the following 241-residue polypeptide: Tumor necrosis factor receptor superfamily member grnd (241 aa).

An N-terminal signal peptide occupies residues 1–27; it reads MSVRKLSALSLSIGGVPLIPSVSLVAA. The Extracellular segment spans residues 28–98; it reads ANGESRDCHG…EMLDIQNTQQ (71 aa). 4 disulfides stabilise this stretch: C35/C47, C40/C54, C57/C77, and C61/C73. N-linked (GlcNAc...) asparagine glycosylation occurs at N63. Residues 99-119 form a helical membrane-spanning segment; the sequence is LILLLLTILLVLIALRCAFQF. Topologically, residues 120-241 are cytoplasmic; the sequence is LRWLIGNRCF…PSAATIPVAF (122 aa).

Interacts (via extracellular cysteine-rich domain) with egr (via secreted TNF-homology soluble form); forms heterohexamers when 3 copies associate with egr trimers. Interacts with Traf6/TRAF2 and veli (via PDZ domain). In terms of processing, N-glycosylated on Asn-63. Glycosylation regulates ligand binding, specifically reducing affinity for the TNF egr, thereby inhibiting activation of JNK signaling. As to expression, expressed in the adult midgut; under normal conditions expressed at lower levels than the other TNF receptor wgn.

Its subcellular location is the apical cell membrane. The protein localises to the cytoplasmic vesicle membrane. Functionally, acts as a receptor for TNF-cytokine egr. Plays a role in activation of JNK signaling and is required for egr-induced apoptosis, including in wing imaginal discs during development. May also play an egr-independent role in cell proliferation. TNF receptor involved in triggering JNK-dependent proliferation of the enteroblast-enterocyte lineage in response to stress-induced release of egr by intestinal stem cells and enteroblasts. Involved in regulation of insulin production in response to dietary protein shortage keeping systemic growth in check. Activation in brain insulin producing cells through binding of egr released into the hemolymph in response to dietary amino acid shortage, results in JNK-dependent inhibition of insulin production. The chain is Tumor necrosis factor receptor superfamily member grnd from Drosophila melanogaster (Fruit fly).